The chain runs to 205 residues: Putative C-type lectin protein FPV001/FPV260 (205 aa).

A C-type lectin domain is found at 84 to 187 (CPRDWISHNG…CSVRRYLVCK (104 aa)).

The sequence is that of Putative C-type lectin protein FPV001/FPV260 from Fowlpox virus (strain NVSL) (FPV).